The chain runs to 394 residues: Probable nucleoredoxin 2 (394 aa).

Thioredoxin domains follow at residues 15 to 176 (GVGG…QTLE) and 180 to 327 (SVSG…EMED).

It belongs to the nucleoredoxin family.

The catalysed reaction is [protein]-dithiol + NAD(+) = [protein]-disulfide + NADH + H(+). It carries out the reaction [protein]-dithiol + NADP(+) = [protein]-disulfide + NADPH + H(+). Functionally, probable thiol-disulfide oxidoreductase that may participate in various redox reactions. This Oryza sativa subsp. japonica (Rice) protein is Probable nucleoredoxin 2.